A 275-amino-acid chain; its full sequence is Phage-like element PBSX protein XkdF (275 aa).

The interval 247-275 is disordered; sequence KARGASKQTADDTGGNTEQVKKSIWSGLL.

To B.subtilis YqbD.

This chain is Phage-like element PBSX protein XkdF (xkdF), found in Bacillus subtilis (strain 168).